The primary structure comprises 215 residues: Cytochrome b6 (215 aa).

Residues 32-52 traverse the membrane as a helical segment; sequence IFYCLGGITLVCFLIQFATGF. C35 provides a ligand contact to heme c. The heme b site is built by H86 and H100. The next 3 helical transmembrane spans lie at 90–110, 116–136, and 186–206; these read ASMM…TGGF, LTWV…VTGY, and AHTF…FLMI. Heme b-binding residues include H187 and H202.

This sequence belongs to the cytochrome b family. PetB subfamily. In terms of assembly, the 4 large subunits of the cytochrome b6-f complex are cytochrome b6, subunit IV (17 kDa polypeptide, PetD), cytochrome f and the Rieske protein, while the 4 small subunits are PetG, PetL, PetM and PetN. The complex functions as a dimer. Heme b is required as a cofactor. It depends on heme c as a cofactor.

The protein resides in the cellular thylakoid membrane. Component of the cytochrome b6-f complex, which mediates electron transfer between photosystem II (PSII) and photosystem I (PSI), cyclic electron flow around PSI, and state transitions. The protein is Cytochrome b6 of Trichormus variabilis (strain ATCC 29413 / PCC 7937) (Anabaena variabilis).